The sequence spans 197 residues: Peptidyl-tRNA hydrolase (197 aa).

Y21 is a tRNA binding site. Catalysis depends on H26, which acts as the Proton acceptor. Positions 72, 74, and 120 each coordinate tRNA.

The protein belongs to the PTH family. Monomer.

The protein localises to the cytoplasm. It catalyses the reaction an N-acyl-L-alpha-aminoacyl-tRNA + H2O = an N-acyl-L-amino acid + a tRNA + H(+). In terms of biological role, hydrolyzes ribosome-free peptidyl-tRNAs (with 1 or more amino acids incorporated), which drop off the ribosome during protein synthesis, or as a result of ribosome stalling. Its function is as follows. Catalyzes the release of premature peptidyl moieties from peptidyl-tRNA molecules trapped in stalled 50S ribosomal subunits, and thus maintains levels of free tRNAs and 50S ribosomes. This Alkalilimnicola ehrlichii (strain ATCC BAA-1101 / DSM 17681 / MLHE-1) protein is Peptidyl-tRNA hydrolase.